A 446-amino-acid chain; its full sequence is Thymidine phosphorylase (446 aa).

Belongs to the thymidine/pyrimidine-nucleoside phosphorylase family. As to quaternary structure, homodimer.

The catalysed reaction is thymidine + phosphate = 2-deoxy-alpha-D-ribose 1-phosphate + thymine. It participates in pyrimidine metabolism; dTMP biosynthesis via salvage pathway; dTMP from thymine: step 1/2. The enzymes which catalyze the reversible phosphorolysis of pyrimidine nucleosides are involved in the degradation of these compounds and in their utilization as carbon and energy sources, or in the rescue of pyrimidine bases for nucleotide synthesis. In Psychromonas ingrahamii (strain DSM 17664 / CCUG 51855 / 37), this protein is Thymidine phosphorylase.